Reading from the N-terminus, the 436-residue chain is Histidinol dehydrogenase (436 aa).

Substrate is bound by residues Thr240, Gln262, and His265. Positions 262 and 265 each coordinate Zn(2+). Active-site proton acceptor residues include Glu331 and His332. The substrate site is built by His332, Asp365, Glu419, and His424. A Zn(2+)-binding site is contributed by Asp365. His424 lines the Zn(2+) pocket.

The protein belongs to the histidinol dehydrogenase family. The cofactor is Zn(2+).

It carries out the reaction L-histidinol + 2 NAD(+) + H2O = L-histidine + 2 NADH + 3 H(+). It participates in amino-acid biosynthesis; L-histidine biosynthesis; L-histidine from 5-phospho-alpha-D-ribose 1-diphosphate: step 9/9. Functionally, catalyzes the sequential NAD-dependent oxidations of L-histidinol to L-histidinaldehyde and then to L-histidine. The protein is Histidinol dehydrogenase of Leifsonia xyli subsp. xyli (strain CTCB07).